Here is a 683-residue protein sequence, read N- to C-terminus: ATP-dependent zinc metalloprotease FtsH (683 aa).

The disordered stretch occupies residues 1-43 (MEDKNIKDDEILDDQNDNQEDVQNQDEEKEIKPKKPKKKVYIS). Over 1-70 (MEDKNIKDDE…KNNNISFRVK (70 aa)) the chain is Cytoplasmic. Residues 10 to 28 (EILDDQNDNQEDVQNQDEE) show a composition bias toward acidic residues. The helical transmembrane segment at 71 to 91 (PPIFFFLILILMSTLFYFYGN) threads the bilayer. Over 92-174 (KTALFQEKRE…IVVLGTPVSS (83 aa)) the chain is Periplasmic. A helical transmembrane segment spans residues 175–195 (IITRAIFSFAPLFMLLFFFYF). The Cytoplasmic portion of the chain corresponds to 196–683 (INKKMMGSSG…LDDEQLEKYY (488 aa)). 270–277 (GEPGTGKT) provides a ligand contact to ATP. Position 494 (His-494) interacts with Zn(2+). Residue Glu-495 is part of the active site. Zn(2+) contacts are provided by His-498 and Asp-569.

The protein in the central section; belongs to the AAA ATPase family. This sequence in the C-terminal section; belongs to the peptidase M41 family. As to quaternary structure, homohexamer. It depends on Zn(2+) as a cofactor.

It localises to the cell inner membrane. Functionally, acts as a processive, ATP-dependent zinc metallopeptidase for both cytoplasmic and membrane proteins. Plays a role in the quality control of integral membrane proteins. This is ATP-dependent zinc metalloprotease FtsH from Streptobacillus moniliformis (strain ATCC 14647 / DSM 12112 / NCTC 10651 / 9901).